A 505-amino-acid chain; its full sequence is Cytochrome P450 9b2 (505 aa).

Position 449 (cysteine 449) interacts with heme.

Belongs to the cytochrome P450 family. Requires heme as cofactor.

The protein resides in the endoplasmic reticulum membrane. It is found in the microsome membrane. Its function is as follows. May be involved in the metabolism of insect hormones and in the breakdown of synthetic insecticides. In Drosophila melanogaster (Fruit fly), this protein is Cytochrome P450 9b2 (Cyp9b2).